The sequence spans 452 residues: Coproporphyrinogen III oxidase, anaerobic 1 (452 aa).

In terms of domain architecture, Radical SAM core spans 45–278 (LDPAVPISVY…ANLAARLFTE (234 aa)). Tyr54 is an S-adenosyl-L-methionine binding site. Cys60 and Cys64 together coordinate [4Fe-4S] cluster. Phe66 contacts S-adenosyl-L-methionine. Cys67 lines the [4Fe-4S] cluster pocket. S-adenosyl-L-methionine contacts are provided by residues Gly111, 112–113 (GT), Glu144, Gln171, Arg183, and Asp208.

It belongs to the anaerobic coproporphyrinogen-III oxidase family. As to quaternary structure, monomer. [4Fe-4S] cluster serves as cofactor.

It localises to the cytoplasm. The enzyme catalyses coproporphyrinogen III + 2 S-adenosyl-L-methionine = protoporphyrinogen IX + 2 5'-deoxyadenosine + 2 L-methionine + 2 CO2. Its pathway is porphyrin-containing compound metabolism; protoporphyrin-IX biosynthesis; protoporphyrinogen-IX from coproporphyrinogen-III (AdoMet route): step 1/1. Anaerobic transformation of coproporphyrinogen III into protoporphyrinogen IX. Dedicated to bacteriochlorophyll biosynthesis. The chain is Coproporphyrinogen III oxidase, anaerobic 1 (hemN) from Cereibacter sphaeroides (strain ATCC 17023 / DSM 158 / JCM 6121 / CCUG 31486 / LMG 2827 / NBRC 12203 / NCIMB 8253 / ATH 2.4.1.) (Rhodobacter sphaeroides).